Reading from the N-terminus, the 348-residue chain is Large ribosomal subunit protein uL3m (348 aa).

A mitochondrion-targeting transit peptide spans 1–40 (MPGWRLLTQVGAQVLGRLGDGLGAALGPGNRTHIWLFVRG).

The protein belongs to the universal ribosomal protein uL3 family. In terms of assembly, component of the mitochondrial large ribosomal subunit (mt-LSU). Mature mammalian 55S mitochondrial ribosomes consist of a small (28S) and a large (39S) subunit. The 28S small subunit contains a 12S ribosomal RNA (12S mt-rRNA) and 30 different proteins. The 39S large subunit contains a 16S rRNA (16S mt-rRNA), a copy of mitochondrial valine transfer RNA (mt-tRNA(Val)), which plays an integral structural role, and 52 different proteins.

It localises to the mitochondrion. This is Large ribosomal subunit protein uL3m (MRPL3) from Homo sapiens (Human).